The primary structure comprises 237 residues: Carboxy-S-adenosyl-L-methionine synthase (237 aa).

Residues Tyr36, 61-63 (GAS), 86-87 (DN), 112-113 (DI), Asn127, and Arg194 contribute to the S-adenosyl-L-methionine site.

It belongs to the class I-like SAM-binding methyltransferase superfamily. Cx-SAM synthase family. Homodimer.

The enzyme catalyses prephenate + S-adenosyl-L-methionine = carboxy-S-adenosyl-L-methionine + 3-phenylpyruvate + H2O. Functionally, catalyzes the conversion of S-adenosyl-L-methionine (SAM) to carboxy-S-adenosyl-L-methionine (Cx-SAM). The polypeptide is Carboxy-S-adenosyl-L-methionine synthase (Ruthia magnifica subsp. Calyptogena magnifica).